A 146-amino-acid polypeptide reads, in one-letter code: Probable flagellum biosynthesis repressor protein FlbT 1 (146 aa).

Belongs to the FlbT family.

Has a post-transcriptional repressor function in flagellum biogenesis. Associates with the 5'-UTR of fljK mRNA and promotes its degradation. This chain is Probable flagellum biosynthesis repressor protein FlbT 1, found in Bradyrhizobium diazoefficiens (strain JCM 10833 / BCRC 13528 / IAM 13628 / NBRC 14792 / USDA 110).